The sequence spans 217 residues: Aprataxin-like protein (217 aa).

The 134-residue stretch at 6–139 folds into the HIT domain; that stretch reads ALKNYVTSPE…HIHVISKDFH (134 aa). Interaction with DNA regions lie at residues 34–38, 121–132, and 144–148; these read DSFPK, HSVPSMANLHIH, and KNKKH. His-130 (nucleophile) is an active-site residue. Zn(2+) is bound by residues Cys-188, Cys-191, His-205, and Glu-209.

It is found in the nucleus. The protein resides in the cytoplasm. It carries out the reaction a 5'-end adenosine-5'-diphospho-5'-2'-deoxyribonucleoside-DNA + H2O = a 5'-end 5'-phospho-2'-deoxyribonucleoside-DNA + AMP + 2 H(+). The catalysed reaction is a 5'-end adenosine-5'-diphospho-5'-ribonucleoside-2'-deoxyribonucleotide-DNA + H2O = a 5'-end 5'-phospho-ribonucleoside-2'-deoxyribonucleotide-DNA + AMP + 2 H(+). The enzyme catalyses a 3'-end 2'-deoxyribonucleotide-3'-diphospho-5'-guanosine-DNA + H2O = a 3'-end 2'-deoxyribonucleotide 3'-phosphate-DNA + GMP + 2 H(+). DNA-binding protein involved in single-strand DNA break repair, double-strand DNA break repair and base excision repair. Resolves abortive DNA ligation intermediates formed either at base excision sites, or when DNA ligases attempt to repair non-ligatable breaks induced by reactive oxygen species. Catalyzes the release of adenylate groups covalently linked to 5'-phosphate termini, resulting in the production of 5'-phosphate termini that can be efficiently rejoined. Likewise, catalyzes the release of 3'-linked guanosine (DNAppG) and inosine (DNAppI) from DNA, but has higher specific activity with 5'-linked adenosine (AppDNA). This is Aprataxin-like protein (HNT3) from Saccharomyces cerevisiae (strain ATCC 204508 / S288c) (Baker's yeast).